Here is a 484-residue protein sequence, read N- to C-terminus: Pre-glycoprotein polyprotein GP complex (484 aa).

Glycine 2 carries the N-myristoyl glycine; by host lipid modification. Residues 2-17 (GQLVSFFQEIPNIIQE) lie on the Extracellular side of the membrane. Residues 18 to 33 (AINIALIAVSLIAILK) traverse the membrane as a helical segment. Residues 34–58 (GLVNLWKSGLFQLLVFLILAGRSCS) are Cytoplasmic-facing. Cysteine 57 provides a ligand contact to Zn(2+). Residues 59–423 (FKIGRSTELQ…QGKTPITLVD (365 aa)) lie on the Extracellular side of the membrane. 4 disulfide bridges follow: cysteine 85–cysteine 225, cysteine 270–cysteine 283, cysteine 292–cysteine 301, and cysteine 355–cysteine 376. N-linked (GlcNAc...) asparagine; by host glycans are attached at residues asparagine 88, asparagine 125, asparagine 178, and asparagine 218. Residues asparagine 356, asparagine 364, asparagine 381, and asparagine 386 are each glycosylated (N-linked (GlcNAc...) asparagine; by host). Residues 424–444 (ICFWSTLFFTTTLFLHLVGFP) traverse the membrane as a helical segment. The Cytoplasmic segment spans residues 445–484 (THRHIQGEPCPLPHKLNSNGGCRCGRYPELKKPTTWHRKH). The Zn(2+) site is built by histidine 446, histidine 448, cysteine 454, histidine 458, cysteine 466, cysteine 468, and histidine 484.

Belongs to the arenaviridae GPC protein family. As to quaternary structure, interacts with glycoprotein G2. Part of the GP complex (GP-C) together with glycoprotein G1 and glycoprotein G2. The GP-complex interacts with protein Z, which interacts with ribonucleocapsid; these interactions may induce virion budding. In terms of assembly, homotrimer; disulfide-linked. In pre-fusion state, G1 homotrimers bind G2 homotrimers via ionic interactions. Part of the GP complex (GP-C) together with glycoprotein G2 and the stable signal peptide. The GP-complex interacts with protein Z, which interacts with ribonucleocapsid; these interactions may induce virion budding. Homotrimer. Interacts with the stable signal peptide. In pre-fusion state, G2 homotrimers bind G1 homotrimers via ionic interactions. Part of the GP complex (GP-C) together with glycoprotein G1 and the stable signal peptide. Acidification in the endosome triggers rearrangements, which ultimately leads to a 6 helix bundle formed by the two heptad repeat domains (HR1 and HR2) in post-fusion state. The GP-complex interacts with protein Z, which interacts with ribonucleocapsid; these interactions may induce virion budding. Post-translationally, specific enzymatic cleavages in vivo yield mature proteins. GP-C polyprotein is cleaved in the endoplasmic reticulum by the host protease MBTPS1. Only cleaved glycoprotein is incorporated into virions. The SSP remains stably associated with the GP complex following cleavage by signal peptidase and plays crucial roles in the trafficking of GP through the secretory pathway. In terms of processing, myristoylation is necessary for GP2-mediated fusion activity.

The protein localises to the virion membrane. It is found in the host endoplasmic reticulum membrane. Its subcellular location is the host Golgi apparatus membrane. It localises to the host cell membrane. Its function is as follows. Functions as a cleaved signal peptide that is retained as the third component of the GP complex (GP-C). Helps to stabilize the spike complex in its native conformation. The SSP is required for efficient glycoprotein expression, post-translational maturation cleavage of G1 and G2, glycoprotein transport to the cell surface plasma membrane, formation of infectious virus particles, and acid pH-dependent glycoprotein-mediated cell fusion. In terms of biological role, glycoprotein G1: Forms the virion spikes together with glycoprotein G2. The glycoprotein spike trimers are connected to the underlying matrix. Interacts with the host receptor leading to virus endocytosis. Forms the virion spikes together with glycoprotein G1. The glycoprotein spike trimers are connected to the underlying matrix. Class I viral fusion protein that directs fusion of viral and host endosomal membranes, leading to delivery of the nucleocapsid into the cytoplasm. Membrane fusion is mediated by irreversible conformational changes induced by acidification. The polypeptide is Pre-glycoprotein polyprotein GP complex (Chapare mammarenavirus (isolate Human/Bolivia/810419/2003)).